The following is a 582-amino-acid chain: Glutaredoxin domain-containing cysteine-rich protein CG12206 (582 aa).

The span at 217–227 (CETLDSGTGSD) shows a compositional bias: polar residues. 2 disordered regions span residues 217 to 244 (CETLDSGTGSDLENHPQQQQQPQQVRSP) and 260 to 300 (EADH…SCDS). The span at 291 to 300 (SSNSSLSCDS) shows a compositional bias: low complexity. In terms of domain architecture, Glutaredoxin spans 423 to 528 (NVKNYMEKDV…QLLRPYKSIA (106 aa)).

The protein belongs to the GRXCR1 family.

The polypeptide is Glutaredoxin domain-containing cysteine-rich protein CG12206 (Drosophila melanogaster (Fruit fly)).